The primary structure comprises 754 residues: Probable TonB-dependent siderophore receptor PirA (754 aa).

Positions 1–24 (MSKRIIQSVLSVSVLASMMSMAFA) are cleaved as a signal peptide. In terms of domain architecture, TBDR plug spans 54–181 (EQVKQSLGVS…AGGVVNIITK (128 aa)). The 569-residue stretch at 186-754 (ETHGSVEFYT…AYYASLKYSF (569 aa)) folds into the TBDR beta-barrel domain. Positions 404–414 (VSTTQGKDSSG) are enriched in polar residues. The disordered stretch occupies residues 404–424 (VSTTQGKDSSGSGYGDQLAKG). Residues Cys511 and Cys519 are joined by a disulfide bond. The TonB C-terminal box motif lies at 737 to 754 (QTYNEPGRAYYASLKYSF).

The protein belongs to the TonB-dependent receptor family.

It localises to the cell outer membrane. Probably involved in the initial step of iron uptake by binding iron chelating siderophores, thereby allowing extraction of iron from the environment. May bind the siderophore, ferric enterobactin, with micromolar affinity. This is Probable TonB-dependent siderophore receptor PirA from Acinetobacter baumannii (strain ATCC 19606 / DSM 30007 / JCM 6841 / CCUG 19606 / CIP 70.34 / NBRC 109757 / NCIMB 12457 / NCTC 12156 / 81).